The chain runs to 638 residues: Threonine--tRNA ligase (638 aa).

Positions 1–61 (MPEITLPDGS…DNDSKVVIIT (61 aa)) constitute a TGS domain. Positions 242–533 (DHRKLGKKHS…LIEQYEAKFP (292 aa)) are catalytic. Zn(2+) is bound by residues C333, H384, and H510.

Belongs to the class-II aminoacyl-tRNA synthetase family. Homodimer. It depends on Zn(2+) as a cofactor.

It is found in the cytoplasm. It catalyses the reaction tRNA(Thr) + L-threonine + ATP = L-threonyl-tRNA(Thr) + AMP + diphosphate + H(+). Its function is as follows. Catalyzes the attachment of threonine to tRNA(Thr) in a two-step reaction: L-threonine is first activated by ATP to form Thr-AMP and then transferred to the acceptor end of tRNA(Thr). Also edits incorrectly charged L-seryl-tRNA(Thr). This chain is Threonine--tRNA ligase, found in Prochlorococcus marinus subsp. pastoris (strain CCMP1986 / NIES-2087 / MED4).